A 157-amino-acid polypeptide reads, in one-letter code: MQLTVKALQGRECNLQVPEDEQVSTLKQLVSEKLNVPVRQQRLLFKGKALADGKRLSDYSIGPNSKLNLVVKPLEKVLLAEGTARRLADSPPPPVWHLISKVLARHFSAADASRVLEQLQRDYERSLSRLTLDDIERLASRFLHPEGTEAMEKGLSK.

A Ubiquitin-like domain is found at 1-76; the sequence is MQLTVKALQG…LNLVVKPLEK (76 aa). Residue lysine 48 forms a Glycyl lysine isopeptide (Lys-Gly) (interchain with G-Cter in ubiquitin) linkage. Serine 90 bears the Phosphoserine mark. Residues 96-138 form a required and sufficient for interaction with BAG6 region; sequence WHLISKVLARHFSAADASRVLEQLQRDYERSLSRLTLDDIERL.

Component of the BAG6/BAT3 complex, at least composed of BAG6, UBL4A and GET4/TRC35. Interacts with BAG6; the interaction is direct and required for UBL4A protein stability. Interacts with USP13; may be indirect via BAG6. Polyubiquitinated. Ubiquitination by AMFR and deubiquitination by USP13 may regulate the interaction between the BAG6/BAT3 complex and SGTA and therefore may regulate client proteins fate.

Its subcellular location is the cytoplasm. The protein localises to the cytosol. The protein resides in the nucleus. Functionally, as part of a cytosolic protein quality control complex, the BAG6/BAT3 complex, maintains misfolded and hydrophobic patches-containing proteins in a soluble state and participates in their proper delivery to the endoplasmic reticulum or alternatively can promote their sorting to the proteasome where they undergo degradation. The BAG6/BAT3 complex is involved in the post-translational delivery of tail-anchored/type II transmembrane proteins to the endoplasmic reticulum membrane. Recruited to ribosomes, it interacts with the transmembrane region of newly synthesized tail-anchored proteins and together with SGTA and ASNA1 mediates their delivery to the endoplasmic reticulum. Client proteins that cannot be properly delivered to the endoplasmic reticulum are ubiquitinated and sorted to the proteasome. Similarly, the BAG6/BAT3 complex also functions as a sorting platform for proteins of the secretory pathway that are mislocalized to the cytosol either delivering them to the proteasome for degradation or to the endoplasmic reticulum. The BAG6/BAT3 complex also plays a role in the endoplasmic reticulum-associated degradation (ERAD), a quality control mechanism that eliminates unwanted proteins of the endoplasmic reticulum through their retrotranslocation to the cytosol and their targeting to the proteasome. It maintains these retrotranslocated proteins in an unfolded yet soluble state condition in the cytosol to ensure their proper delivery to the proteasome. In Oryctolagus cuniculus (Rabbit), this protein is Ubiquitin-like protein 4A (UBL4A).